Reading from the N-terminus, the 382-residue chain is Lipid-A-disaccharide synthase (382 aa).

This sequence belongs to the LpxB family.

The enzyme catalyses 2-N,3-O-bis[(3R)-3-hydroxytetradecanoyl]-alpha-D-glucosaminyl 1-phosphate + UDP-2-N,3-O-bis[(3R)-3-hydroxytetradecanoyl]-alpha-D-glucosamine = lipid A disaccharide (E. coli) + UDP + H(+). It carries out the reaction a lipid X + a UDP-2-N,3-O-bis[(3R)-3-hydroxyacyl]-alpha-D-glucosamine = a lipid A disaccharide + UDP + H(+). The protein operates within glycolipid biosynthesis; lipid IV(A) biosynthesis; lipid IV(A) from (3R)-3-hydroxytetradecanoyl-[acyl-carrier-protein] and UDP-N-acetyl-alpha-D-glucosamine: step 5/6. In terms of biological role, condensation of UDP-2,3-diacylglucosamine and 2,3-diacylglucosamine-1-phosphate to form lipid A disaccharide, a precursor of lipid A, a phosphorylated glycolipid that anchors the lipopolysaccharide to the outer membrane of the cell. This is Lipid-A-disaccharide synthase from Salmonella typhimurium (strain LT2 / SGSC1412 / ATCC 700720).